The sequence spans 109 residues: Small ribosomal subunit protein bS6 (109 aa).

The protein belongs to the bacterial ribosomal protein bS6 family.

Functionally, binds together with bS18 to 16S ribosomal RNA. This chain is Small ribosomal subunit protein bS6, found in Anaplasma marginale (strain St. Maries).